The chain runs to 417 residues: GPI mannosyltransferase 2 (417 aa).

Helical transmembrane passes span 10–30 (FLII…LVWL), 104–124 (IVLK…WIVY), 142–162 (LALT…LISV), 167–187 (IAFT…SFDV), 206–226 (FCFA…LFYV), 239–259 (ITSI…FVYF), 312–332 (IPNF…ITYF), 344–364 (YIWI…VQII), and 394–414 (YYVM…ACFL).

It belongs to the PIGV family.

It localises to the endoplasmic reticulum membrane. It participates in glycolipid biosynthesis; glycosylphosphatidylinositol-anchor biosynthesis. Functionally, mannosyltransferase involved in glycosylphosphatidylinositol-anchor biosynthesis. Transfers the second mannose to the glycosylphosphatidylinositol during GPI precursor assembly. In Kluyveromyces lactis (strain ATCC 8585 / CBS 2359 / DSM 70799 / NBRC 1267 / NRRL Y-1140 / WM37) (Yeast), this protein is GPI mannosyltransferase 2 (GPI18).